The sequence spans 400 residues: Protein phyllopod (400 aa).

An interaction with sina region spans residues 109-127; the sequence is QERTKLRPVAMVRPTVRVQ. The interval 125-145 is disordered; sequence RVQPQSQPQLQPQVPINPTPA. The segment covering 127–138 has biased composition (low complexity); sequence QPQSQPQLQPQV. The interval 241 to 320 is interaction with ttk; that stretch reads YQRFPQPSVD…TAISEVLPTA (80 aa). Residues 319–362 adopt a coiled-coil conformation; sequence TARYQVTHEENKENQQAQEMELELEEEEEVDGRAELEVVQEAEA. Positions 346–382 are disordered; sequence EEVDGRAELEVVQEAEAPLEPQSHHKQGNSHQNSHQA.

In terms of assembly, component of some E3 complex at least composed of sina, ebi and phyl, required for the degradation of ttk. As to expression, in embryos, it is ubiquitously present before cellularization. During stages 9-11, it is expressed in neuroblasts and the SOP cells. From stage 12 onward, it decreases, but remains in a subset of PNS cells at stages 12-14. Weakly expressed in wing imaginal disks, in the SOP cells of wing margin bristles, notal macrochaetes, and other sensory organs. In leg disks, it is expressed in the precursors of the femoral chordotonal organs, as well as in external sensory SOP cells. Strongly expressed in the eye-antenna disk, it is specifically expressed in R1, R6 and R7 cells, and not in R3, R3, R4, R5 and R8 cells.

It localises to the nucleus. In terms of biological role, essential adapter component of E3 ubiquitin ligase complexes; involved in R7 photoreceptor cell differentiation, embryonic nervous system, external sensory organ development and specification of particular muscles. E3 ubiquitin ligase complexes mediate ubiquitination and subsequent proteasomal degradation of target proteins. Required for specification of R7 photoreceptor cell fate in the eye by participating in the ubiquitination and subsequent proteasomal degradation of Tramtrack (ttk), a general inhibitor of photoreceptor differentiation. Acts downstream of Notch signaling to specify the fate of the SOP (sensory organ precursor) cells and their progeny, probably via the sina-mediated proteasomal degradation of ttk. Its restricted pattern of expression, upon Notch and Ras signaling pathways, suggests that it acts as a key determinant in E3 complexes to trigger protein proteolysis in appropriate cells. This is Protein phyllopod (phyl) from Drosophila melanogaster (Fruit fly).